A 257-amino-acid chain; its full sequence is MASSLCASSAIAAISSPSFLGGKKLRLKKKLTVPAVSRPDASVRAVAADPDRPIWFPGSTPPEWLDGSLPGDFGFDPLGLSSDPDSLKWNVQAEIVHCRWAMLGAAGIFIPEFLTKIGILNTPSWYTAGEQEYFTDKTTLFVVELILIGWAEGRRWADIIKPGSVNTDPVFPNNKLTGTDVGYPGGLWFDPLGWGSGSPAKLKELRTKEIKNGRLAMLAVMGAWFQHIYTGTGPIDNLFAHLADPGHATIFAAFTPK.

A chloroplast-targeting transit peptide spans 1–43; it reads MASSLCASSAIAAISSPSFLGGKKLRLKKKLTVPAVSRPDASV. Residue tryptophan 55 coordinates chlorophyll b. Positions 75, 81, and 94 each coordinate chlorophyll a. Residue arginine 99 coordinates chlorophyll b. A run of 2 helical transmembrane segments spans residues 100-120 and 133-153; these read WAML…IGIL and YFTD…WAEG. Chlorophyll b-binding residues include glutamate 152 and arginine 155. Residues lysine 208, glutamate 209, asparagine 212, arginine 214, glutamine 226, and histidine 241 each contribute to the chlorophyll a site. The helical transmembrane segment at 215-235 threads the bilayer; the sequence is LAMLAVMGAWFQHIYTGTGPI.

This sequence belongs to the light-harvesting chlorophyll a/b-binding (LHC) protein family. As to quaternary structure, the LHC complex consists of chlorophyll a-b binding proteins. Red-emitting heterodimers with LHCA3 and LHCA5. Binds to carotenoids. It depends on Binds at least 14 chlorophylls (8 Chl-a and 6 Chl-b) and carotenoids such as lutein and neoxanthin. as a cofactor. In terms of processing, photoregulated by reversible phosphorylation of its threonine residues.

Its subcellular location is the plastid. It is found in the chloroplast thylakoid membrane. The light-harvesting complex (LHC) functions as a light receptor, it captures and delivers excitation energy to photosystems with which it is closely associated, here photosystem I. The sequence is that of Photosystem I chlorophyll a/b-binding protein 2, chloroplastic from Arabidopsis thaliana (Mouse-ear cress).